A 183-amino-acid polypeptide reads, in one-letter code: Protein jagunal homolog 1 (183 aa).

The Cytoplasmic segment spans residues 1–39 (MASRAGPRAAGTDGSDFQHRERVAMHYQMSVTLKYEIKK). The residue at position 3 (serine 3) is a Phosphoserine. A helical membrane pass occupies residues 40–60 (LIYVHLVIWLLLVAKMSVGHL). Over 61-71 (RLLSHDQVAMP) the chain is Lumenal. The helical transmembrane segment at 72–92 (YQWEYPYLLSIVPSVLGLLSF) threads the bilayer. The Cytoplasmic portion of the chain corresponds to 93–96 (PRNN). The helical transmembrane segment at 97-117 (ISYLVLSMISMGLFSIAPLIY) threads the bilayer. The Lumenal portion of the chain corresponds to 118-137 (GSMEMFPAAQQLYRHGKAYR). The chain crosses the membrane as a helical span at residues 138-158 (FLFGFSAVSVMYLVLVLAVQV). Residues 159–183 (HAWQLYYSKKLLDSWFTSTQEKKRK) lie on the Cytoplasmic side of the membrane.

Belongs to the jagunal family. As to quaternary structure, interacts with COPA, COPB2 and COPG2.

Its subcellular location is the endoplasmic reticulum membrane. Endoplasmic reticulum transmembrane protein involved in vesicle-mediated transport, which is required for neutrophil function. Required for vesicle-mediated transport; it is however unclear whether it is involved in early secretory pathway or intracellular protein transport. Acts as a regulator of neutrophil function, probably via its role in vesicle-mediated transport: required for defense against fungal pathogens and for granulocyte colony-stimulating factor (GM-CSF) signaling pathway; possibly by regulating glycosylation and/or targeting of proteins contributing to the viability and migration of neutrophils. The sequence is that of Protein jagunal homolog 1 from Mus musculus (Mouse).